The sequence spans 156 residues: MARMHTRRRGSSDSDKPAADEPPEWSDVDEDAIEARVVELAEQGHSPSEIGLKLRDEGVQGTPIPDVSLATGKKVTEILEENEAEPDLPEDLRNLLERAVRLRDHMDENPGDYQNKRALQNTQSKIRRLIDYYRGDEVDENFTYSYDNAVEALGLE.

Residues 1-67 (MARMHTRRRG…GVQGTPIPDV (67 aa)) form a disordered region. The span at 10 to 19 (GSSDSDKPAA) shows a compositional bias: basic and acidic residues. Acidic residues predominate over residues 21–32 (EPPEWSDVDEDA).

Belongs to the universal ribosomal protein uS15 family. Part of the 30S ribosomal subunit.

In Haloarcula marismortui (strain ATCC 43049 / DSM 3752 / JCM 8966 / VKM B-1809) (Halobacterium marismortui), this protein is Small ribosomal subunit protein uS15.